The sequence spans 102 residues: Protein GOLVEN 4 (102 aa).

The first 27 residues, 1–27 (MEMKKWSYANLITLALLFLFFIILLLA), serve as a signal peptide directing secretion. Positions 28-89 (FQGGSRDDDH…QEREVYVELR (62 aa)) are excised as a propeptide. The tract at residues 56–78 (KSLKPINPTKKNGFEYPDQGSHD) is disordered. Residue tyrosine 91 is modified to Sulfotyrosine. Proline 99 is modified (hydroxyproline).

Belongs to the RGF family. As to quaternary structure, binds to LRR receptor-like serine/threonine-protein kinases to trigger their dimerization with SERK proteins and subsequent signaling. As to expression, expressed in roots and sepals.

Its subcellular location is the secreted. Functionally, signaling peptide (root growth factor) that promotes root hairs formation and growth. Maintains the postembryonic root stem cell niche. Regulates the pattern of root growth and lateral root development by modulating the length and the number of cortical cells in the root apical meristem (RAM), and the anticlinal asymmetric cell divisions in lateral root initiation cells. The sequence is that of Protein GOLVEN 4 from Arabidopsis thaliana (Mouse-ear cress).